We begin with the raw amino-acid sequence, 238 residues long: Protein MIS12 homolog (238 aa).

Residues 117–149 (ELDAELDSLRDKLNVVGKRSVELDSELQALERS) adopt a coiled-coil conformation.

This sequence belongs to the mis12 family.

It is found in the chromosome. The protein resides in the centromere. The protein localises to the kinetochore. Constitutive component of kinetochores that is essential for proper cell division during mitotic cell cycle. May play a role in the modulation of centromere during meiosis. The sequence is that of Protein MIS12 homolog from Arabidopsis thaliana (Mouse-ear cress).